We begin with the raw amino-acid sequence, 968 residues long: AP2-associated protein kinase 1 (968 aa).

N-acetylmethionine is present on Met1. Residues 1 to 11 are compositionally biased toward basic and acidic residues; the sequence is MKKFFDSRREQ. Residues 1–25 are disordered; the sequence is MKKFFDSRREQGGSGLGSGSSGGGG. Positions 12–25 are enriched in gly residues; the sequence is GGSGLGSGSSGGGG. Residue Ser14 is modified to Phosphoserine. Residues 46 to 315 enclose the Protein kinase domain; it reads VTVDEVLAEG…QVSFFSFKLL (270 aa). Residues 52-60 and Lys74 contribute to the ATP site; that span reads LAEGGFAIV. The Proton acceptor role is filled by Asp176. Tyr234 carries the phosphotyrosine modification. A Phosphoserine modification is found at Ser235. Disordered stretches follow at residues 327 to 485 and 578 to 640; these read SPIP…AQAP and IQPP…AGHR. Phosphothreonine occurs at positions 354 and 389. An Omega-N-methylarginine modification is found at Arg391. Positions 437–448 are enriched in pro residues; it reads QAPPAPQQPPSA. Composition is skewed to low complexity over residues 449–472 and 578–589; these read PAQGLPAQAQATPQHQQQLFLKQQ and IQPPQAQPATAS. A Phosphothreonine modification is found at Thr613. Ser625 carries the post-translational modification Phosphoserine. Thr627 carries the phosphothreonine modification. A phosphoserine mark is found at Ser630, Ser631, Ser644, and Ser657. Thr660 bears the Phosphothreonine mark. A disordered region spans residues 671–708; that stretch reads SLNKSKSATTTPSGSPRASQQNVYNPSEGSTWNPFDDD. Over residues 679 to 703 the composition is skewed to polar residues; sequence TTTPSGSPRASQQNVYNPSEGSTWN. Tyr694 is subject to Phosphotyrosine. A phosphoserine mark is found at Ser738, Ser853, Ser944, and Ser945. A clathrin-binding domain (CBD) region spans residues 830 to 967; sequence EKADVAVESL…SLLLVDQLID (138 aa). Disordered stretches follow at residues 843-862 and 929-952; these read LEPPVPQRLPSQTESVASNR and PVLITKNPQGGHSRNSSGSSESSL. Residues 851 to 862 show a composition bias toward polar residues; it reads LPSQTESVASNR. The span at 938–951 shows a compositional bias: low complexity; sequence GGHSRNSSGSSESS.

This sequence belongs to the protein kinase superfamily. Ser/Thr protein kinase family. In terms of assembly, interacts (via CBD domain) with clathrin. Interacts with AP-2 complex. Interacts with NUMB. Interacts with alpha-adaptin. Interacts with EPS15. Interacts with membrane-bound activated NOTCH1 but not with the inactive full-length form of NOTCH1. Preferentially interacts with monoubiquitinated activated NOTCH1 compared to the non-ubiquitinated form. In terms of processing, autophosphorylated.

It is found in the cell membrane. The protein localises to the membrane. Its subcellular location is the clathrin-coated pit. It localises to the presynapse. The enzyme catalyses L-seryl-[protein] + ATP = O-phospho-L-seryl-[protein] + ADP + H(+). It catalyses the reaction L-threonyl-[protein] + ATP = O-phospho-L-threonyl-[protein] + ADP + H(+). With respect to regulation, stimulated by clathrin. Its function is as follows. Regulates clathrin-mediated endocytosis by phosphorylating the AP2M1/mu2 subunit of the adaptor protein complex 2 (AP-2) which ensures high affinity binding of AP-2 to cargo membrane proteins during the initial stages of endocytosis. Preferentially, may phosphorylate substrates on threonine residues. Regulates phosphorylation of other AP-2 subunits as well as AP-2 localization and AP-2-mediated internalization of ligand complexes. Phosphorylates NUMB and regulates its cellular localization, promoting NUMB localization to endosomes. Binds to and stabilizes the activated form of NOTCH1, increases its localization in endosomes and regulates its transcriptional activity. The polypeptide is AP2-associated protein kinase 1 (AAK1) (Sus scrofa (Pig)).